The sequence spans 447 residues: tRNA-2-methylthio-N(6)-dimethylallyladenosine synthase (447 aa).

Residues 14–130 (KKVYIRTFGC…LPAMIANAGQ (117 aa)) form the MTTase N-terminal domain. [4Fe-4S] cluster is bound by residues Cys-23, Cys-59, Cys-93, Cys-166, Cys-170, and Cys-173. Positions 152–382 (RSGTISAFIP…IALQGSISGE (231 aa)) constitute a Radical SAM core domain. A TRAM domain is found at 385 to 447 (AAEVGAVVEV…TPATLIGTPA (63 aa)).

The protein belongs to the methylthiotransferase family. MiaB subfamily. In terms of assembly, monomer. It depends on [4Fe-4S] cluster as a cofactor.

Its subcellular location is the cytoplasm. The catalysed reaction is N(6)-dimethylallyladenosine(37) in tRNA + (sulfur carrier)-SH + AH2 + 2 S-adenosyl-L-methionine = 2-methylsulfanyl-N(6)-dimethylallyladenosine(37) in tRNA + (sulfur carrier)-H + 5'-deoxyadenosine + L-methionine + A + S-adenosyl-L-homocysteine + 2 H(+). Functionally, catalyzes the methylthiolation of N6-(dimethylallyl)adenosine (i(6)A), leading to the formation of 2-methylthio-N6-(dimethylallyl)adenosine (ms(2)i(6)A) at position 37 in tRNAs that read codons beginning with uridine. In Chlorobium phaeobacteroides (strain BS1), this protein is tRNA-2-methylthio-N(6)-dimethylallyladenosine synthase.